The following is a 348-amino-acid chain: Killer cell immunoglobulin-like receptor 2DL1 (348 aa).

An N-terminal signal peptide occupies residues 1–21 (MSLLVVSMACVGFFLLQGAWP). The Extracellular portion of the chain corresponds to 22–245 (HEGVHRKPSL…SKTGNPRHLH (224 aa)). 2 consecutive Ig-like C2-type domains span residues 42 to 107 (EETV…VTHS) and 142 to 205 (GENV…FHDS). Cysteine 49 and cysteine 100 are oxidised to a cystine. Asparagine 67, asparagine 84, asparagine 144, and asparagine 178 each carry an N-linked (GlcNAc...) asparagine glycan. A disulfide bridge connects residues cysteine 149 and cysteine 198. The segment at 220–239 (VTGNPSNSWPSPTEPSSKTG) is disordered. The chain crosses the membrane as a helical span at residues 246 to 264 (ILIGTSVVIILFILLFFLL). Residues 265–348 (HRWCSNKKNA…ESRSKVVSCP (84 aa)) are Cytoplasmic-facing.

Belongs to the immunoglobulin superfamily. As to quaternary structure, interacts with ARRB2. Interacts with PTPN6; the interaction is enhanced by ARRB2. Interacts with PTPN11; the interaction is enhanced by ARRB2. As to expression, expressed by NK cells.

It is found in the cell membrane. Receptor on natural killer (NK) cells for some HLA-C alleles such as w4 and w6. Inhibits the activity of NK cells thus preventing cell lysis. This is Killer cell immunoglobulin-like receptor 2DL1 from Homo sapiens (Human).